The primary structure comprises 394 residues: Acetyl-CoA acetyltransferase (394 aa).

The active-site Acyl-thioester intermediate is C89. Catalysis depends on proton acceptor residues H350 and C380.

The protein belongs to the thiolase-like superfamily. Thiolase family. In terms of assembly, homotetramer.

The protein resides in the cytoplasm. It catalyses the reaction 2 acetyl-CoA = acetoacetyl-CoA + CoA. It participates in biopolymer metabolism; poly-(R)-3-hydroxybutanoate biosynthesis. It functions in the pathway metabolic intermediate biosynthesis; (R)-mevalonate biosynthesis; (R)-mevalonate from acetyl-CoA: step 1/3. This is Acetyl-CoA acetyltransferase from Allochromatium vinosum (strain ATCC 17899 / DSM 180 / NBRC 103801 / NCIMB 10441 / D) (Chromatium vinosum).